Reading from the N-terminus, the 341-residue chain is MITIDGSYGEGGGQILRTSVALSTITGEPVRIVNIRANRPNPGLRPQHLHAILALKHLANAEVKGAHVGSRELVFIPKKLEAKEISIDIGTAGSITLVLQALLPAMVFAREKVKFRITGGTDVSWSPPVDYLSNVTLFALEKIGIHGEIRVIRRGHYPKGGGIVEGYVEPWNEKRELVAKEYSRIIKIEGISHATNLPSHVAERQARAAKDELLQLKVPIEIRTEISRSIGPGSGIVVWAETDCLRLGGDALGKKGKPAEIVGKEAAQELLDQLKPGHCVDKFLGDQLIPFLAFSGGVIWVSEITNHLKTNIWVVESFLGRIFDVDGNVGEPGKIRVIRRV.

ATP is bound by residues Q100 and 283–287; that span reads FLGDQ. Catalysis depends on H307, which acts as the Tele-AMP-histidine intermediate.

The protein belongs to the RNA 3'-terminal cyclase family. Type 1 subfamily.

It localises to the cytoplasm. It catalyses the reaction a 3'-end 3'-phospho-ribonucleotide-RNA + ATP = a 3'-end 2',3'-cyclophospho-ribonucleotide-RNA + AMP + diphosphate. Its function is as follows. Catalyzes the conversion of 3'-phosphate to a 2',3'-cyclic phosphodiester at the end of RNA. The mechanism of action of the enzyme occurs in 3 steps: (A) adenylation of the enzyme by ATP; (B) transfer of adenylate to an RNA-N3'P to produce RNA-N3'PP5'A; (C) and attack of the adjacent 2'-hydroxyl on the 3'-phosphorus in the diester linkage to produce the cyclic end product. The biological role of this enzyme is unknown but it is likely to function in some aspects of cellular RNA processing. The protein is RNA 3'-terminal phosphate cyclase (rtcA) of Pyrococcus horikoshii (strain ATCC 700860 / DSM 12428 / JCM 9974 / NBRC 100139 / OT-3).